The primary structure comprises 194 residues: 3-isopropylmalate dehydratase small subunit (194 aa).

Belongs to the LeuD family. LeuD type 1 subfamily. As to quaternary structure, heterodimer of LeuC and LeuD.

It carries out the reaction (2R,3S)-3-isopropylmalate = (2S)-2-isopropylmalate. It functions in the pathway amino-acid biosynthesis; L-leucine biosynthesis; L-leucine from 3-methyl-2-oxobutanoate: step 2/4. Catalyzes the isomerization between 2-isopropylmalate and 3-isopropylmalate, via the formation of 2-isopropylmaleate. This Halalkalibacterium halodurans (strain ATCC BAA-125 / DSM 18197 / FERM 7344 / JCM 9153 / C-125) (Bacillus halodurans) protein is 3-isopropylmalate dehydratase small subunit.